A 193-amino-acid polypeptide reads, in one-letter code: Interferon type A3 (193 aa).

A signal peptide spans 1-31; sequence MAVPASPQHPRGYGILLLTLLLKALATTASA. 3 cysteine pairs are disulfide-bonded: Cys32–Cys129, Cys61–Cys155, and Cys68–Cys168. Residues Asn65, Asn71, Asn108, and Asn186 are each glycosylated (N-linked (GlcNAc...) asparagine).

Belongs to the alpha/beta interferon family.

It localises to the secreted. In terms of biological role, has antiviral activities. The protein is Interferon type A3 (IFNA3) of Gallus gallus (Chicken).